The following is a 610-amino-acid chain: UvrABC system protein C (610 aa).

Residues 16 to 94 form the GIY-YIG domain; sequence SQPGVYRMYD…IKLYQPRYNV (79 aa). A UVR domain is found at 204–239; that stretch reads DQVLTQLIARMEKASQDLAFEEAARIRDQIQAVRRV.

It belongs to the UvrC family. Interacts with UvrB in an incision complex.

The protein resides in the cytoplasm. In terms of biological role, the UvrABC repair system catalyzes the recognition and processing of DNA lesions. UvrC both incises the 5' and 3' sides of the lesion. The N-terminal half is responsible for the 3' incision and the C-terminal half is responsible for the 5' incision. The chain is UvrABC system protein C from Salmonella gallinarum (strain 287/91 / NCTC 13346).